The chain runs to 472 residues: Homeobox protein PKNOX2 (472 aa).

Residues 1-62 (MMQHASPAPA…STPVPSAPID (62 aa)) form a disordered region. The segment covering 26–38 (DSPQMTATTQPPS) has biased composition (polar residues). Residues 46–56 (SAPSAAASTPV) show a composition bias toward low complexity. An MEIS N-terminal domain is found at 96–179 (GSECITSASF…MHSDNLLRND (84 aa)). The segment at residues 291 to 350 (KRGVLPKHATNIMRSWLFQHLMHPYPTEDEKRQIAAQTNLTLLQVNNWFVNARRRILQPM) is a DNA-binding region (homeobox). 3 disordered regions span residues 351-371 (LDAS…QHRP), 386-405 (QQQG…LDNL), and 423-472 (AAHD…DSLV). The span at 361 to 371 (KAKKIKSQHRP) shows a compositional bias: basic residues. Residues 396-405 (PDGSINLDNL) are compositionally biased toward polar residues. The segment covering 429–454 (LDGTEEEDEDEMEEEEEEELEEEVDE) has biased composition (acidic residues).

Belongs to the TALE/MEIS homeobox family.

It localises to the nucleus. The polypeptide is Homeobox protein PKNOX2 (PKNOX2) (Pongo abelii (Sumatran orangutan)).